A 230-amino-acid polypeptide reads, in one-letter code: Large ribosomal subunit protein uL1 (230 aa).

Belongs to the universal ribosomal protein uL1 family. In terms of assembly, part of the 50S ribosomal subunit.

Its function is as follows. Binds directly to 23S rRNA. The L1 stalk is quite mobile in the ribosome, and is involved in E site tRNA release. Functionally, protein L1 is also a translational repressor protein, it controls the translation of the L11 operon by binding to its mRNA. The chain is Large ribosomal subunit protein uL1 from Leptospira biflexa serovar Patoc (strain Patoc 1 / Ames).